Here is a 386-residue protein sequence, read N- to C-terminus: Patatin-16 (386 aa).

Positions Met1 to Ala23 are cleaved as a signal peptide. Residues Leu32 to Val229 form the PNPLA domain. Residues Gly36–Gly41 carry the GXGXXG motif. Positions Gly75–Gly79 match the GXSXG motif. The Nucleophile role is filled by Ser77. N-linked (GlcNAc...) asparagine glycosylation occurs at Asn115. Asp215 functions as the Proton acceptor in the catalytic mechanism. The DGA/G motif lies at Asp215–Ala217. A coiled-coil region spans residues Glu360–Ala384.

It belongs to the patatin family.

It is found in the vacuole. Functionally, probable lipolytic acyl hydrolase (LAH), an activity which is thought to be involved in the response of tubers to pathogens. The chain is Patatin-16 from Solanum tuberosum (Potato).